Consider the following 779-residue polypeptide: Phosphoribosylformylglycinamidine synthase subunit PurL (779 aa).

His-52 is an active-site residue. ATP contacts are provided by Tyr-55 and Lys-94. Residue Glu-96 participates in Mg(2+) binding. Residues 97 to 100 and Arg-119 each bind substrate; that span reads SHNH. His-98 acts as the Proton acceptor in catalysis. Asp-120 is a Mg(2+) binding site. Gln-243 is a substrate binding site. Asp-271 serves as a coordination point for Mg(2+). 315–317 lines the substrate pocket; that stretch reads ESQ. Asn-523 and Gly-560 together coordinate ATP. Asn-561 contributes to the Mg(2+) binding site. Ser-563 provides a ligand contact to substrate.

Belongs to the FGAMS family. In terms of assembly, monomer. Part of the FGAM synthase complex composed of 1 PurL, 1 PurQ and 2 PurS subunits.

The protein resides in the cytoplasm. The enzyme catalyses N(2)-formyl-N(1)-(5-phospho-beta-D-ribosyl)glycinamide + L-glutamine + ATP + H2O = 2-formamido-N(1)-(5-O-phospho-beta-D-ribosyl)acetamidine + L-glutamate + ADP + phosphate + H(+). The protein operates within purine metabolism; IMP biosynthesis via de novo pathway; 5-amino-1-(5-phospho-D-ribosyl)imidazole from N(2)-formyl-N(1)-(5-phospho-D-ribosyl)glycinamide: step 1/2. In terms of biological role, part of the phosphoribosylformylglycinamidine synthase complex involved in the purines biosynthetic pathway. Catalyzes the ATP-dependent conversion of formylglycinamide ribonucleotide (FGAR) and glutamine to yield formylglycinamidine ribonucleotide (FGAM) and glutamate. The FGAM synthase complex is composed of three subunits. PurQ produces an ammonia molecule by converting glutamine to glutamate. PurL transfers the ammonia molecule to FGAR to form FGAM in an ATP-dependent manner. PurS interacts with PurQ and PurL and is thought to assist in the transfer of the ammonia molecule from PurQ to PurL. This is Phosphoribosylformylglycinamidine synthase subunit PurL from Prochlorococcus marinus (strain MIT 9312).